The sequence spans 122 residues: UPF0102 protein XOO3839 (122 aa).

Belongs to the UPF0102 family.

This Xanthomonas oryzae pv. oryzae (strain KACC10331 / KXO85) protein is UPF0102 protein XOO3839.